A 297-amino-acid polypeptide reads, in one-letter code: PDZ domain-containing protein GIPC3 (297 aa).

The 81-residue stretch at 97-177 folds into the PDZ domain; the sequence is EVEVTKTEDA…SQPFTLRLVQ (81 aa).

Belongs to the GIPC family. Expressed in adult lung, brain and testis. In the inner ear, it is expressed in the inner and outer hair cells of the organ of Corti. Also expressed in cochlear spiral ganglion neurons.

In terms of biological role, required for postnatal maturation of the hair bundle and long-term survival of hair cells and spiral ganglion. This Mus musculus (Mouse) protein is PDZ domain-containing protein GIPC3 (Gipc3).